The primary structure comprises 1040 residues: MQVLPPSSTGGPSRLFIMRPVATTLLMVAILLAGIIGYRALPVSALPEVDYPTIQVVTLYPGASPDVMTSAVTAPLERQFGQMSGLKQMSSQSSGGASVITLQFQLTLPLDVAEQEVQAAINAATNLLPSDLPNPPVYSKVNPADPPIMTLAVTSTAMPMTQVEDMVETRVAQKISQISGVGLVTLSGGQRPAVRVKLNAQAIAALGLTSETVRTAITGANVNSAKGSLDGPSRAVTLSANDQMQSAEEYRQLIIAYQNGAPIRLGDVATVEQGAENSWLGAWANKEQAIVMNVQRQPGANIISTADSIRQMLPQLTESLPKSVKVTVLSDRTTNIRASVDDTQFELMMAIALVVMIIYLFLRNIPATIIPGVAVPLSLIGTFAVMVFLDFSINNLTLMALTIATGFVVDDAIVVIENISRYIEKGEKPLAAALKGAGEIGFTIISLTFSLIAVLIPLLFMGDIVGRLFREFAITLAVAILISAVVSLTLTPMMCARMLSQESLRKQNRFSRASEKMFDRIIAAYGRGLAKVLNHPWLTLSVALSTLLLSVLLWVFIPKGFFPVQDNGIIQGTLQAPQSSSFANMAQRQRQVADVILQDPAVQSLTSFVGVDGTNPSLNSARLQINLKPLDERDDRVQKVIARLQTAVDKVPGVDLFLQPTQDLTIDTQVSRTQYQFTLQATSLDALSTWVPQLMEKLQQLPQLSDVSSDWQDKGLVAYVNVDRDSASRLGISMADVDNALYNAFGQRLISTIYTQANQYRVVLEHNTENTPGLAALDTIRLTSSDGGVVPLSSIAKIEPRFAPLSINHLDQFPVTTISFNVPDNYSLGDAVQAIMDTEKTLNLPVDITTQFQGSTLAFQSALGSTVWLIVAAVVAMYIVLGILYESFIHPITILSTLPTAGVGALLALMIAGSELDVIAIIGIILLIGIVKKNAIMMIDFALAAEREQGMSPREAIYQACLLRFRPILMTTLAALLGALPLMLSTGVGAELRRPLGIGMVGGLIVSQVLTLFTTPVIYLLFDRLALWTKSRFARHEEEA.

A run of 12 helical transmembrane segments spans residues 16-36 (FIMR…AGII), 347-367 (LMMA…NIPA), 369-389 (IIPG…MVFL), 396-416 (LTLM…IVVI), 440-460 (IGFT…PLLF), 472-492 (FAIT…TLTP), 537-557 (WLTL…WVFI), 863-883 (LGST…VLGI), 888-908 (FIHP…ALLA), 911-931 (IAGS…IGIV), 968-988 (ILMT…STGV), and 998-1018 (IGMV…TPVI).

This sequence belongs to the resistance-nodulation-cell division (RND) (TC 2.A.6) family. MdtB subfamily. In terms of assembly, part of a tripartite efflux system composed of MdtA, MdtB and MdtC. MdtB forms a heteromultimer with MdtC.

Its subcellular location is the cell inner membrane. Its function is as follows. The MdtABC tripartite complex confers resistance against novobiocin and deoxycholate. This chain is Multidrug resistance protein MdtB, found in Escherichia coli O81 (strain ED1a).